Here is a 202-residue protein sequence, read N- to C-terminus: Probable GTP-binding protein EngB (202 aa).

Residues 26–200 (VSKEIAFTGS…KAQLDSWFSI (175 aa)) enclose the EngB-type G domain. GTP-binding positions include 34 to 41 (GSSNVGKS), 61 to 65 (GSTKT), 79 to 82 (DLPG), 146 to 149 (NKAD), and 179 to 181 (FSS). Residues S41 and T63 each contribute to the Mg(2+) site.

This sequence belongs to the TRAFAC class TrmE-Era-EngA-EngB-Septin-like GTPase superfamily. EngB GTPase family. It depends on Mg(2+) as a cofactor.

Necessary for normal cell division and for the maintenance of normal septation. This chain is Probable GTP-binding protein EngB, found in Baumannia cicadellinicola subsp. Homalodisca coagulata.